Consider the following 265-residue polypeptide: Transcriptional activator AggR (265 aa).

The region spanning 164–261 (DKVRNTIEKD…GITPKQFLTY (98 aa)) is the HTH araC/xylS-type domain. DNA-binding regions (H-T-H motif) lie at residues 181–202 (AIIA…ESEY) and 228–251 (ISQI…VKHF).

As to quaternary structure, homodimer.

In terms of biological role, transcriptional activator of aggregative adherence fimbria I expression in enteroaggregative E.coli. This is Transcriptional activator AggR (aggR) from Escherichia coli.